A 344-amino-acid polypeptide reads, in one-letter code: Short chain dehydrogenase/reductase mfmJ (344 aa).

Positions 51, 76, 99, 126, 213, and 217 each coordinate NADP(+). Y213 (proton donor) is an active-site residue. Residue K217 is the Lowers pKa of active site Tyr of the active site.

It belongs to the short-chain dehydrogenases/reductases (SDR) family.

In terms of biological role, short chain dehydrogenase/reductase; part of the gene cluster that mediates the biosynthesis of the phthalide-terpenoid hybrid 11'-O-desmethylfendlerol. MfmJ seems not to be involved directly in the biosynthesis of 11'-O-desmethylfendlerol and its role has still to be determined. The biosynthesis of 11'-O-desmethylfendlerol begins with the NR-PKS mfmB that forms 3,5-dimethylorsellinic acid (DMOA), which is then transformed into the phthalide 5,7-dihydroxy-4-(hydroxymethyl)-6-methylphthalide by the cytochrome P450 monooxygenase mfmA and the hydrolase mfmC. Subsequently, the methyltransferase mfmE catalyzes 7-O-methylation to yield 5-hydroxy-4-(hydroxymethyl)-7-methoxy-6-methylphthalide, which undergoes C-3 hydroxylation by the cytochrome P450 monooxygenase mfmF. The resultant cyclopolic acid (2,5-dihydroxy-4-(hydroxymethyl)-7-methoxy-6-methylphthalide) is then farnesylated by the DMATS-type prenyltransferase mfmD to afford 5-O-farnesylcyclopolic acid. Finally, the Pyr4-family terpene cyclase mfmH cyclizes the farnesyl moiety of 5-O-farnesylcyclopolic acid into a drimane-like structure, thus completing the biosynthesis of 11'-O-desmethylfendlerol. This Annulohypoxylon moriforme (Filamentous fungus) protein is Short chain dehydrogenase/reductase mfmJ.